The following is a 142-amino-acid chain: Large ribosomal subunit protein uL13 (142 aa).

It belongs to the universal ribosomal protein uL13 family. Part of the 50S ribosomal subunit.

This protein is one of the early assembly proteins of the 50S ribosomal subunit, although it is not seen to bind rRNA by itself. It is important during the early stages of 50S assembly. The sequence is that of Large ribosomal subunit protein uL13 from Ectopseudomonas mendocina (strain ymp) (Pseudomonas mendocina).